The chain runs to 282 residues: Keratin-associated protein 10-1 (282 aa).

24 consecutive repeat copies span residues 26–30 (CCEPH), 31–35 (CCALS), 36–40 (CCAPA), 57–61 (CCQAA), 79–83 (CCQQS), 89–93 (CCTSS), 99–103 (CCVPV), 104–108 (CCKPV), 109–113 (CCLPT), 121–125 (CCQQS), 131–135 (CCASS), 141–145 (CCVPV), 146–150 (CCKPV), 163–167 (CCQQS), 173–177 (CCTSS), 183–187 (CCVPV), 193–197 (CCKPI), 198–202 (CCVPV), 210–214 (CCQQS), 220–224 (CCTTS), 225–229 (CCRPS), 244–248 (CCMPV), 251–255 (CCAPA), and 262–266 (CCRPA). The segment at 26 to 266 (CCEPHCCALS…SCQASCCRPA (241 aa)) is 24 X 5 AA repeats of C-C-X(3).

It belongs to the KRTAP type 10 family. As to quaternary structure, interacts with hair keratins. As to expression, restricted to a narrow region of the hair fiber cuticle, lying approximately 20 cell layers above the apex of the dermal papilla of the hair root; not detected in any other tissues.

In terms of biological role, in the hair cortex, hair keratin intermediate filaments are embedded in an interfilamentous matrix, consisting of hair keratin-associated proteins (KRTAP), which are essential for the formation of a rigid and resistant hair shaft through their extensive disulfide bond cross-linking with abundant cysteine residues of hair keratins. The matrix proteins include the high-sulfur and high-glycine-tyrosine keratins. This chain is Keratin-associated protein 10-1 (KRTAP10-1), found in Homo sapiens (Human).